The chain runs to 404 residues: Cysteine desulfurase IscS (404 aa).

Pyridoxal 5'-phosphate-binding positions include 73-74, Asn153, Gln181, and 201-203; these read AT and SAH. At Lys204 the chain carries N6-(pyridoxal phosphate)lysine. Position 241 (Thr241) interacts with pyridoxal 5'-phosphate. The active-site Cysteine persulfide intermediate is Cys327. Residue Cys327 coordinates [2Fe-2S] cluster.

It belongs to the class-V pyridoxal-phosphate-dependent aminotransferase family. NifS/IscS subfamily. As to quaternary structure, homodimer. Forms a heterotetramer with IscU, interacts with other sulfur acceptors. Pyridoxal 5'-phosphate serves as cofactor.

It is found in the cytoplasm. The catalysed reaction is (sulfur carrier)-H + L-cysteine = (sulfur carrier)-SH + L-alanine. The protein operates within cofactor biosynthesis; iron-sulfur cluster biosynthesis. Master enzyme that delivers sulfur to a number of partners involved in Fe-S cluster assembly, tRNA modification or cofactor biosynthesis. Catalyzes the removal of elemental sulfur atoms from cysteine to produce alanine. Functions as a sulfur delivery protein for Fe-S cluster synthesis onto IscU, an Fe-S scaffold assembly protein, as well as other S acceptor proteins. This Anaeromyxobacter sp. (strain Fw109-5) protein is Cysteine desulfurase IscS.